Consider the following 717-residue polypeptide: DNA ligase (717 aa).

Residues 44-48, 93-94, and glutamate 127 contribute to the NAD(+) site; these read DADYD and SL. The N6-AMP-lysine intermediate role is filled by lysine 129. Residues arginine 150, glutamate 186, lysine 302, and lysine 326 each coordinate NAD(+). The Zn(2+) site is built by cysteine 431, cysteine 434, cysteine 455, and cysteine 461. Residues 639-717 enclose the BRCT domain; the sequence is ATDSPVAGKT…EDEWLALIGG (79 aa).

This sequence belongs to the NAD-dependent DNA ligase family. LigA subfamily. Mg(2+) serves as cofactor. The cofactor is Mn(2+).

The enzyme catalyses NAD(+) + (deoxyribonucleotide)n-3'-hydroxyl + 5'-phospho-(deoxyribonucleotide)m = (deoxyribonucleotide)n+m + AMP + beta-nicotinamide D-nucleotide.. Its function is as follows. DNA ligase that catalyzes the formation of phosphodiester linkages between 5'-phosphoryl and 3'-hydroxyl groups in double-stranded DNA using NAD as a coenzyme and as the energy source for the reaction. It is essential for DNA replication and repair of damaged DNA. This chain is DNA ligase, found in Sinorhizobium medicae (strain WSM419) (Ensifer medicae).